Reading from the N-terminus, the 210-residue chain is Kalata-B2 (210 aa).

The first 22 residues, 1–22 (MAKFTNCLVLSLLLAAFVGAFG), serve as a signal peptide directing secretion. A propeptide spanning residues 23–66 (AEFSEADKATLVNDIAENIQKEILGEVKTSETVLTMFLKEMQLK) is cleaved from the precursor. The segment at residues 67–95 (GLPVCGETCFGGTCNTPGCSCTWPICTRD) is a cross-link (cyclopeptide (Gly-Asp)). Cystine bridges form between Cys71–Cys85, Cys75–Cys87, and Cys80–Cys92. Positions 96 to 120 (SLPMRAGGKTSETTLHMFLKEMQLK) are excised as a propeptide. Residues 121–149 (GLPVCGETCFGGTCNTPGCSCTWPICTRD) constitute a cross-link (cyclopeptide (Gly-Asp)). Intrachain disulfides connect Cys125–Cys139, Cys129–Cys141, and Cys134–Cys146. The propeptide occupies 150–174 (SLPMSAGGKTSETTLHMFLKEMQLK). The segment at residues 175–203 (GLPVCGETCFGGTCNTPGCSCTWPICTRD) is a cross-link (cyclopeptide (Gly-Asp)). Intrachain disulfides connect Cys179-Cys193, Cys183-Cys195, and Cys188-Cys200. The propeptide occupies 204-210 (SLPLVAA).

This sequence belongs to the cyclotide family. Moebius subfamily. Kalata-B2 is a cyclic peptide which occurs in three forms: with unmodified Trp, with Trp oxidized to form N-formylkynurenine and with Trp oxidized to form kynurenine. Oxidation is enhanced by exposure to sunlight.

Its function is as follows. Probably participates in a plant defense mechanism. Inhibitory effect on the growth and development of larvae from Helicoverpa punctigera. Has hemolytic activity. This is Kalata-B2 (OAK4) from Oldenlandia affinis.